The primary structure comprises 166 residues: Large ribosomal subunit protein mL41 (166 aa).

The N-terminal 26 residues, 1–26, are a transit peptide targeting the mitochondrion; the sequence is MQNCIKLVPLALKCPQRAISTSAVLD.

It belongs to the mitochondrion-specific ribosomal protein mL41 family. As to quaternary structure, component of the mitochondrial ribosome large subunit (39S) which comprises a 16S rRNA and about 50 distinct proteins.

It localises to the mitochondrion. This is Large ribosomal subunit protein mL41 (mRpL41) from Drosophila pseudoobscura pseudoobscura (Fruit fly).